Reading from the N-terminus, the 306-residue chain is Ribosomal RNA small subunit methyltransferase H (306 aa).

S-adenosyl-L-methionine is bound by residues 33–35 (GGY), D51, F78, D96, and Q103.

It belongs to the methyltransferase superfamily. RsmH family.

The protein resides in the cytoplasm. The enzyme catalyses cytidine(1402) in 16S rRNA + S-adenosyl-L-methionine = N(4)-methylcytidine(1402) in 16S rRNA + S-adenosyl-L-homocysteine + H(+). Its function is as follows. Specifically methylates the N4 position of cytidine in position 1402 (C1402) of 16S rRNA. The chain is Ribosomal RNA small subunit methyltransferase H from Rickettsia prowazekii (strain Madrid E).